Reading from the N-terminus, the 160-residue chain is E3 ubiquitin ligase complex SCF subunit sconC (160 aa).

An interaction with the F-box domain of F-box proteins region spans residues Ile101 to Arg160.

Belongs to the SKP1 family. Component of the SCF (SKP1-CUL1-F-box protein) E3 ubiquitin ligase complexes.

Its pathway is protein modification; protein ubiquitination. In terms of biological role, essential component of the SCF (SKP1-CUL1-F-box protein) E3 ubiquitin ligase complexes, which mediate the ubiquitination and subsequent proteasomal degradation of target proteins. Controls sulfur metabolite repression, probably by mediating the inactivation or degradation of the metR transcription factor. In Talaromyces marneffei (strain ATCC 18224 / CBS 334.59 / QM 7333) (Penicillium marneffei), this protein is E3 ubiquitin ligase complex SCF subunit sconC (sconC).